Reading from the N-terminus, the 292-residue chain is [LysW]-aminoadipate kinase (292 aa).

Residues Arg89 and Asn193 each contribute to the substrate site.

This sequence belongs to the acetylglutamate kinase family. LysZ subfamily.

It localises to the cytoplasm. It catalyses the reaction [amino-group carrier protein]-C-terminal-N-(1,4-dicarboxybutan-1-yl)-L-glutamine + ATP = [amino-group carrier protein]-C-terminal-N-(1-carboxy-5-phosphooxy-5-oxopentan-1-yl)-L-glutamine + ADP. It participates in amino-acid biosynthesis; L-lysine biosynthesis via AAA pathway; L-lysine from L-alpha-aminoadipate (Thermus route): step 2/5. Catalyzes the phosphorylation of LysW-gamma-alpha-aminoadipate. This Deinococcus radiodurans (strain ATCC 13939 / DSM 20539 / JCM 16871 / CCUG 27074 / LMG 4051 / NBRC 15346 / NCIMB 9279 / VKM B-1422 / R1) protein is [LysW]-aminoadipate kinase.